The primary structure comprises 181 residues: Oligoribonuclease (181 aa).

One can recognise an Exonuclease domain in the interval 8–171 (LIWIDLEMTG…LDIQESIAEL (164 aa)). The active site involves Tyr-129.

This sequence belongs to the oligoribonuclease family.

It localises to the cytoplasm. Its function is as follows. 3'-to-5' exoribonuclease specific for small oligoribonucleotides. The polypeptide is Oligoribonuclease (Shewanella amazonensis (strain ATCC BAA-1098 / SB2B)).